The sequence spans 316 residues: Transcription initiation factor IIB (316 aa).

The TFIIB-type zinc finger occupies 11 to 42 (PRVTCPNHPDAILVEDYRAGDMICPECGLVVG). Cysteine 15, histidine 18, cysteine 34, and cysteine 37 together coordinate Zn(2+). 3 positions are modified to phosphoserine: serine 70, serine 76, and serine 92. A run of 2 repeats spans residues 124-200 (MADR…LILK) and 218-294 (FCSN…LIYP). DNA contacts are provided by lysine 152, arginine 154, lysine 189, and lysine 196. The tract at residues 189-193 (KEIGR) is core promoter DNA-binding. Lysine 238 bears the N6-acetyllysine; by autocatalysis mark. The tract at residues 244 to 316 (LVPGRSPISV…DTPVDKLPQL (73 aa)) is necessary for TATA box-bound TBP complex formation. A DNA-binding site is contributed by arginine 248. Residues 249–252 (SPIS) are core promoter DNA-binding. Positions 272, 281, 284, 286, and 290 each coordinate DNA. Positions 283–286 (VTIR) are core promoter DNA-binding.

This sequence belongs to the TFIIB family. As to quaternary structure, found in a ternary complex with TATA box-bound TBP. Part of a TFIID-containing RNA polymerase II pre-initiation complex (PIC) that is composed of TBP and at least GTF2A1, GTF2A2, GTF2E1, GTF2E2, GTF2F1, GTF2H2, GTF2H3, GTF2H4, GTF2H5, GTF2B, TCEA1, ERCC2, ERCC3, TAF1, TAF2, TAF3, TAF4, TAF5, TAF6, TAF7, TAF8, TAF9, TAF10, TAF11, TAF12 and TAF13. Associates with TFIID-TFIIA (DA complex) to form TFIID-TFIIA-TFIIB (DAB complex), which is then recognized by RNA polymerase II (Pol II). Found in a RNA polymerase II initiation complex. Interacts (via C-terminus) with TBP; this interaction with TATA box-bound TBP guides Pol II into the PIC. Interacts (via N-terminus) with Pol II. Interacts (via C-terminus) with SSU72; this interaction is inhibited by SYMPK. Interacts with NR2F1; this interaction is direct. Interacts with PGR. Interacts with ESR1. Interacts with GTF2F1 (via C-terminus and preferentially via acetylated form); this interaction prevents binding of GTF2B to GTF2F2. Interacts with GTF2F2 (via N-terminus); this interaction is inhibited in presence of GTF2F1. Interacts with the transcription elongation factor TCEA2. Interacts with HSF1 (via transactivation domain). Interacts with GPBP1. Acetylated. Autoacetylated; autoacetylation at Lys-238 stimulates transcription activation.

The protein resides in the nucleus. Its subcellular location is the chromosome. The catalysed reaction is L-lysyl-[protein] + acetyl-CoA = N(6)-acetyl-L-lysyl-[protein] + CoA + H(+). In terms of biological role, general transcription factor that plays a role in transcription initiation by RNA polymerase II (Pol II). Involved in the pre-initiation complex (PIC) formation and Pol II recruitment at promoter DNA. Together with the TATA box-bound TBP forms the core initiation complex and provides a bridge between TBP and the Pol II-TFIIF complex. Released from the PIC early following the onset of transcription during the initiation and elongation transition and reassociates with TBP during the next transcription cycle. Associates with chromatin to core promoter-specific regions. Binds to two distinct DNA core promoter consensus sequence elements in a TBP-independent manner; these IIB-recognition elements (BREs) are localized immediately upstream (BREu), 5'-[GC][GC][GA]CGCC-3', and downstream (BREd), 5'-[GA]T[TGA][TG][GT][TG][TG]-3', of the TATA box element. Modulates transcription start site selection. Also exhibits autoacetyltransferase activity that contributes to the activated transcription. The sequence is that of Transcription initiation factor IIB from Mus musculus (Mouse).